The following is a 469-amino-acid chain: 3-isopropylmalate dehydratase large subunit (469 aa).

[4Fe-4S] cluster contacts are provided by Cys350, Cys410, and Cys413.

Belongs to the aconitase/IPM isomerase family. LeuC type 1 subfamily. As to quaternary structure, heterodimer of LeuC and LeuD. Requires [4Fe-4S] cluster as cofactor.

It carries out the reaction (2R,3S)-3-isopropylmalate = (2S)-2-isopropylmalate. It functions in the pathway amino-acid biosynthesis; L-leucine biosynthesis; L-leucine from 3-methyl-2-oxobutanoate: step 2/4. Catalyzes the isomerization between 2-isopropylmalate and 3-isopropylmalate, via the formation of 2-isopropylmaleate. The sequence is that of 3-isopropylmalate dehydratase large subunit from Mesorhizobium japonicum (strain LMG 29417 / CECT 9101 / MAFF 303099) (Mesorhizobium loti (strain MAFF 303099)).